Here is a 298-residue protein sequence, read N- to C-terminus: Olfactory receptor 52Z1P (298 aa).

At 1 to 14 (MGIPGLEGLHTWIS) the chain is on the extracellular side. The chain crosses the membrane as a helical span at residues 15-35 (IPFSFMYIVAVAGNIFLIFLI). At 36–43 (MTERSLHE) the chain is on the cytoplasmic side. Residues 44–64 (PMYLFLSMLASADFLLATAAA) traverse the membrane as a helical segment. The Extracellular segment spans residues 65 to 85 (PKVLAILWFHSMDISFGSCVS). The cysteines at positions 83 and 164 are disulfide-linked. Residues 86–106 (QMFFIHFIFVAESAILLAMAF) form a helical membrane-spanning segment. The Cytoplasmic segment spans residues 107 to 128 (DRYVAICYPLRYTILTSSAVRK). A helical membrane pass occupies residues 129-149 (IGIAAVVRSFFICCPFIFLVY). The Extracellular portion of the chain corresponds to 150 to 178 (RLTYCGRNIIPHSYCEHIARLACGNINVN). Residues 179-199 (IIYGLTVALLSTGLDIVLIII) traverse the membrane as a helical segment. The Cytoplasmic portion of the chain corresponds to 200–223 (SYTMILHSVFQISSWAARFKALST). A helical transmembrane segment spans residues 224–244 (CGSHICVIFMFYTPAFFSFLA). Over 245 to 257 (HRFGGKTIPHHIH) the chain is Extracellular. A helical membrane pass occupies residues 258-278 (ILVGSLYVLVPPMLNPIIYGV). At 279 to 298 (KTKQIKDRVILLFSPISVCC) the chain is on the cytoplasmic side.

The protein belongs to the G-protein coupled receptor 1 family.

The protein localises to the cell membrane. Odorant receptor. In Homo sapiens (Human), this protein is Olfactory receptor 52Z1P.